Here is a 586-residue protein sequence, read N- to C-terminus: Anaerobic glycerol-3-phosphate dehydrogenase subunit A1 (586 aa).

6–34 provides a ligand contact to FAD; that stretch reads SVLVIGGGSTGTGIARDLAMRGLDVTLVE. Positions 559 to 586 are disordered; it reads GGAVADGGRERAADRADDDALGGADGDN. Acidic residues predominate over residues 574–586; that stretch reads ADDDALGGADGDN.

This sequence belongs to the FAD-dependent glycerol-3-phosphate dehydrogenase family. Composed of a catalytic GlpA/B dimer and of membrane bound GlpC. The cofactor is FAD. Requires FMN as cofactor.

It localises to the cell membrane. It carries out the reaction a quinone + sn-glycerol 3-phosphate = dihydroxyacetone phosphate + a quinol. It participates in polyol metabolism; glycerol degradation via glycerol kinase pathway; glycerone phosphate from sn-glycerol 3-phosphate (anaerobic route): step 1/1. Its activity is regulated as follows. Up-regulated by glycerol and no inhibition by glucose. Functionally, conversion of glycerol 3-phosphate to dihydroxyacetone phosphate. Required for growth on glycerol and for glycerol metabolism. This chain is Anaerobic glycerol-3-phosphate dehydrogenase subunit A1 (gpdA1), found in Haloferax volcanii (strain ATCC 29605 / DSM 3757 / JCM 8879 / NBRC 14742 / NCIMB 2012 / VKM B-1768 / DS2) (Halobacterium volcanii).